Consider the following 80-residue polypeptide: Sulfur carrier protein TusA (80 aa).

The Cysteine persulfide intermediate role is filled by C17.

Belongs to the sulfur carrier protein TusA family.

It localises to the cytoplasm. Functionally, sulfur carrier protein which probably makes part of a sulfur-relay system. This is Sulfur carrier protein TusA from Pseudomonas putida (strain W619).